Reading from the N-terminus, the 376-residue chain is 5-amino-6-(D-ribitylamino)uracil--L-tyrosine 4-hydroxyphenyl transferase 1 (376 aa).

The 226-residue stretch at 50–275 folds into the Radical SAM core domain; sequence VTYVVNRNIN…PGLEDLKVYA (226 aa). Residues cysteine 64, cysteine 68, and cysteine 71 each coordinate [4Fe-4S] cluster.

It belongs to the radical SAM superfamily. CofH family. In terms of assembly, consists of two subunits, CofG and CofH. Requires [4Fe-4S] cluster as cofactor.

It carries out the reaction 5-amino-6-(D-ribitylamino)uracil + L-tyrosine + S-adenosyl-L-methionine = 5-amino-5-(4-hydroxybenzyl)-6-(D-ribitylimino)-5,6-dihydrouracil + 2-iminoacetate + 5'-deoxyadenosine + L-methionine + H(+). It participates in cofactor biosynthesis; coenzyme F0 biosynthesis. Functionally, catalyzes the radical-mediated synthesis of 5-amino-5-(4-hydroxybenzyl)-6-(D-ribitylimino)-5,6-dihydrouracil from 5-amino-6-(D-ribitylamino)uracil and L-tyrosine. The protein is 5-amino-6-(D-ribitylamino)uracil--L-tyrosine 4-hydroxyphenyl transferase 1 of Methanosarcina mazei (strain ATCC BAA-159 / DSM 3647 / Goe1 / Go1 / JCM 11833 / OCM 88) (Methanosarcina frisia).